The primary structure comprises 188 residues: Protein crossbronx-like (188 aa).

The UBC core domain maps to 15-174 (KQGYHILAEY…ANQVVKLHCG (160 aa)).

Belongs to the ubiquitin-conjugating enzyme family. FTS subfamily.

The polypeptide is Protein crossbronx-like (Drosophila simulans (Fruit fly)).